The chain runs to 339 residues: Protein FAM76B (339 aa).

N-acetylalanine is present on Ala2. Residues Ser22 and Ser148 each carry the phosphoserine modification. The segment at 144 to 243 (EQRKSLGSSH…INQSADSGGT (100 aa)) is disordered. Over residues 148–160 (SLGSSHSNSSSSS) the composition is skewed to low complexity. The segment covering 167–189 (HHSKHHHHHHHHHHRHSSGHHKV) has biased composition (basic residues). Ser193 is subject to Phosphoserine. Thr215 is modified (phosphothreonine). Over residues 215–224 (TPKKKPKLES) the composition is skewed to basic and acidic residues. Over residues 228–243 (NGDSSSINQSADSGGT) the composition is skewed to polar residues. Residues 248–328 (LISQLKEEVM…QVAALSKGKK (81 aa)) are a coiled coil.

Belongs to the FAM76 family. As to quaternary structure, interacts with HNRNPA2B1 (via C-terminus); the interaction results in retention of HNRNPA2B1 in the nucleus and inhibition of the NF-kappa-B-mediated inflammatory pathway.

The protein localises to the nucleus speckle. Functionally, negatively regulates the NF-kappa-B-mediated inflammatory pathway by preventing the translocation of HNRNPA2B1 from the nucleus to the cytoplasm. Inhibits the PI3K/Akt/NF-kappa-B pathway-mediated polarization of M1 macrophages by binding to and stabilizing PIK3CD mRNA, resulting in increased levels of PIK3CD protein and increased levels of phosphorylated downstream target AKT which leads to decreased NF-kappa-B signaling. The polypeptide is Protein FAM76B (Fam76b) (Mus musculus (Mouse)).